Here is a 471-residue protein sequence, read N- to C-terminus: UDP-N-acetylmuramate--L-alanine ligase (471 aa).

An ATP-binding site is contributed by 112–118 (GTHGKTT).

The protein belongs to the MurCDEF family.

The protein localises to the cytoplasm. It catalyses the reaction UDP-N-acetyl-alpha-D-muramate + L-alanine + ATP = UDP-N-acetyl-alpha-D-muramoyl-L-alanine + ADP + phosphate + H(+). The protein operates within cell wall biogenesis; peptidoglycan biosynthesis. Cell wall formation. In Aromatoleum aromaticum (strain DSM 19018 / LMG 30748 / EbN1) (Azoarcus sp. (strain EbN1)), this protein is UDP-N-acetylmuramate--L-alanine ligase.